The following is a 360-amino-acid chain: Blue-light-activated histidine kinase 1 (360 aa).

A PAS domain is found at 38-109 (LFLETTQQTR…KLREGIAAER (72 aa)). An S-4a-FMN cysteine modification is found at C85. The PAC domain occupies 109-163 (RYTVVDLLNYRKDGIPFWNAVHVGPIYGEDGTLQYFYGSQWDITDIVAERRKAET). H173 carries the phosphohistidine; by autocatalysis modification. The segment at 260-303 (RSVTALGLALHELATNAVKYGALSVDAGRVEISWSREDGDVTLV) is HWE histidine kinase domain.

Post-translationally, FMN binds covalently to cysteine after exposure to blue light and this bond is spontaneously broken in the dark.

The catalysed reaction is ATP + protein L-histidine = ADP + protein N-phospho-L-histidine.. In terms of biological role, photosensitive kinase that is involved in increased bacterial virulence upon exposure to light. This chain is Blue-light-activated histidine kinase 1, found in Erythrobacter litoralis (strain HTCC2594).